Consider the following 194-residue polypeptide: Recombination protein RecR (194 aa).

Residues 52-67 (CTECRTFTEEEVCHIC) form a C4-type zinc finger. The Toprim domain maps to 76–171 (GQICVVESPA…EASRIAHGVP (96 aa)).

This sequence belongs to the RecR family.

Functionally, may play a role in DNA repair. It seems to be involved in an RecBC-independent recombinational process of DNA repair. It may act with RecF and RecO. This Vibrio campbellii (strain ATCC BAA-1116) protein is Recombination protein RecR.